A 265-amino-acid chain; its full sequence is Hydroxyacylglutathione hydrolase (265 aa).

Zn(2+)-binding residues include His-53, His-55, Asp-57, His-58, His-109, Asp-126, and His-164.

The protein belongs to the metallo-beta-lactamase superfamily. Glyoxalase II family. Monomer. The cofactor is Zn(2+).

The catalysed reaction is an S-(2-hydroxyacyl)glutathione + H2O = a 2-hydroxy carboxylate + glutathione + H(+). It participates in secondary metabolite metabolism; methylglyoxal degradation; (R)-lactate from methylglyoxal: step 2/2. In terms of biological role, thiolesterase that catalyzes the hydrolysis of S-D-lactoyl-glutathione to form glutathione and D-lactic acid. The protein is Hydroxyacylglutathione hydrolase of Dechloromonas aromatica (strain RCB).